The chain runs to 153 residues: NADPH-dependent 7-cyano-7-deazaguanine reductase (153 aa).

Cys-51 acts as the Thioimide intermediate in catalysis. Asp-58 serves as the catalytic Proton donor. Substrate-binding positions include 73-75 and 92-93; these read LES and HE.

Belongs to the GTP cyclohydrolase I family. QueF type 1 subfamily.

The protein localises to the cytoplasm. The enzyme catalyses 7-aminomethyl-7-carbaguanine + 2 NADP(+) = 7-cyano-7-deazaguanine + 2 NADPH + 3 H(+). It participates in tRNA modification; tRNA-queuosine biosynthesis. Its function is as follows. Catalyzes the NADPH-dependent reduction of 7-cyano-7-deazaguanine (preQ0) to 7-aminomethyl-7-deazaguanine (preQ1). The sequence is that of NADPH-dependent 7-cyano-7-deazaguanine reductase from Bradyrhizobium diazoefficiens (strain JCM 10833 / BCRC 13528 / IAM 13628 / NBRC 14792 / USDA 110).